Reading from the N-terminus, the 149-residue chain is D-aminoacyl-tRNA deacylase (149 aa).

Positions 137–138 match the Gly-cisPro motif, important for rejection of L-amino acids motif; the sequence is GP.

It belongs to the DTD family. Homodimer.

Its subcellular location is the cytoplasm. It catalyses the reaction glycyl-tRNA(Ala) + H2O = tRNA(Ala) + glycine + H(+). The catalysed reaction is a D-aminoacyl-tRNA + H2O = a tRNA + a D-alpha-amino acid + H(+). In terms of biological role, an aminoacyl-tRNA editing enzyme that deacylates mischarged D-aminoacyl-tRNAs. Also deacylates mischarged glycyl-tRNA(Ala), protecting cells against glycine mischarging by AlaRS. Acts via tRNA-based rather than protein-based catalysis; rejects L-amino acids rather than detecting D-amino acids in the active site. By recycling D-aminoacyl-tRNA to D-amino acids and free tRNA molecules, this enzyme counteracts the toxicity associated with the formation of D-aminoacyl-tRNA entities in vivo and helps enforce protein L-homochirality. The polypeptide is D-aminoacyl-tRNA deacylase (Clostridium beijerinckii (strain ATCC 51743 / NCIMB 8052) (Clostridium acetobutylicum)).